Reading from the N-terminus, the 631-residue chain is MLYNLRQELLAGIRAATSDAGYDYEVDQSAIELEDITDEEKGEFSSPISFSIAAAAGAPPVDVAAAIADAHRSNGLPAEVEAVTVEGGHINYHADTTDLADATLSTILRDGSEYGTRTDADPDTILADVSSPNIAKPLHVGHLRNTILSDAVMNILEARGHDVTRDNHLGDWGVQFGNLMHEYTEFGDEATLEDDAIEHLLDLYQQFEQRDSMLADLEDDETVTDQFADAVTEERDYHADSGKEWFTRLEQGDEDATALWERFRTVSIDRFKQTYDDLDVAFDVWNGESFYAQEGWNDVIIEKAIENDVAMRGEGESVYIPVYPDDYENVGDPQAADVDASLDRARQMREANDDLEDADFDPFYIVKSDGSTLYGTRDLATIEYRIEEYDADQSVYVVANEQNQYFQQLFVAARKMGYNDIKLKHIDYGLISLPEGSMSTRKGQIITAREVLDRAQDRAEEIIAEKGRIDDAEAQSVATKIALATIKYEMVAAKRERDTTFDIDESVALEGDTGPYVQYAATRGYSILDGADAAPEIDDLDPSVFNDTDVELLFELARYPLVLERCEERYDAAPLAHYLLQLAHVFNSFYHKNAVLDAENARTERLLLTKATTQIFDNGLGLLGIDVLEEM.

The 'HIGH' region signature appears at 132–142 (PNIAKPLHVGH).

Belongs to the class-I aminoacyl-tRNA synthetase family.

It is found in the cytoplasm. The catalysed reaction is tRNA(Arg) + L-arginine + ATP = L-arginyl-tRNA(Arg) + AMP + diphosphate. This Halobacterium salinarum (strain ATCC 700922 / JCM 11081 / NRC-1) (Halobacterium halobium) protein is Arginine--tRNA ligase.